Consider the following 511-residue polypeptide: Glucose-6-phosphate 1-dehydrogenase, cytoplasmic isoform (511 aa).

NADP(+) is bound by residues 36–43 (GASGDLAK), Arg71, Tyr151, and Lys178. D-glucose 6-phosphate-binding positions include Lys178, 208-212 (HYLGK), Glu246, and Asp265. His270 functions as the Proton acceptor in the catalytic mechanism. Lys353 contacts NADP(+). D-glucose 6-phosphate-binding residues include Lys356 and Arg361. Positions 362, 366, and 390 each coordinate NADP(+). Gln392 lines the D-glucose 6-phosphate pocket. Residues 398-400 (YMK), 418-420 (DLS), Arg484, and Trp506 contribute to the NADP(+) site.

It belongs to the glucose-6-phosphate dehydrogenase family. Homotetramer. Found in tubers, stolons, roots, and flower buds.

The protein localises to the cytoplasm. The enzyme catalyses D-glucose 6-phosphate + NADP(+) = 6-phospho-D-glucono-1,5-lactone + NADPH + H(+). It participates in carbohydrate degradation; pentose phosphate pathway; D-ribulose 5-phosphate from D-glucose 6-phosphate (oxidative stage): step 1/3. With respect to regulation, regulated by metabolites. Catalyzes the rate-limiting step of the oxidative pentose-phosphate pathway, which represents a route for the dissimilation of carbohydrates besides glycolysis. The main function of this enzyme is to generate NADPH for reductive biosyntheses. The sequence is that of Glucose-6-phosphate 1-dehydrogenase, cytoplasmic isoform (G6PDH) from Solanum tuberosum (Potato).